The primary structure comprises 631 residues: Phosphomethylpyrimidine synthase (631 aa).

Substrate contacts are provided by residues N239, M268, Y297, H333, 353–355 (SRG), 394–397 (DGLR), and E433. H437 provides a ligand contact to Zn(2+). Y460 provides a ligand contact to substrate. H501 provides a ligand contact to Zn(2+). 3 residues coordinate [4Fe-4S] cluster: C581, C584, and C589.

It belongs to the ThiC family. In terms of assembly, homodimer. [4Fe-4S] cluster is required as a cofactor.

The catalysed reaction is 5-amino-1-(5-phospho-beta-D-ribosyl)imidazole + S-adenosyl-L-methionine = 4-amino-2-methyl-5-(phosphooxymethyl)pyrimidine + CO + 5'-deoxyadenosine + formate + L-methionine + 3 H(+). Its pathway is cofactor biosynthesis; thiamine diphosphate biosynthesis. In terms of biological role, catalyzes the synthesis of the hydroxymethylpyrimidine phosphate (HMP-P) moiety of thiamine from aminoimidazole ribotide (AIR) in a radical S-adenosyl-L-methionine (SAM)-dependent reaction. In Escherichia coli O7:K1 (strain IAI39 / ExPEC), this protein is Phosphomethylpyrimidine synthase.